A 164-amino-acid polypeptide reads, in one-letter code: Dihydrofolate reductase (164 aa).

The DHFR domain maps to 2–162; that stretch reads NISIIVAMSQ…FYVTFKILKK (161 aa). 6 to 8 contributes to the substrate binding site; sequence IVA. Residues 7 to 8 and 15 to 20 contribute to the NADP(+) site; these read VA and IGQKNS. Aspartate 28 is a binding site for substrate. 44 to 47 provides a ligand contact to NADP(+); sequence GRKT. Residue arginine 58 coordinates substrate. NADP(+) is bound by residues 63-66 and 96-101; these read LTRQ and IGGSNL. Substrate is bound at residue threonine 115.

It belongs to the dihydrofolate reductase family.

It carries out the reaction (6S)-5,6,7,8-tetrahydrofolate + NADP(+) = 7,8-dihydrofolate + NADPH + H(+). It participates in cofactor biosynthesis; tetrahydrofolate biosynthesis; 5,6,7,8-tetrahydrofolate from 7,8-dihydrofolate: step 1/1. In terms of biological role, key enzyme in folate metabolism. Catalyzes an essential reaction for de novo glycine and purine synthesis, and for DNA precursor synthesis. This is Dihydrofolate reductase (folA) from Buchnera aphidicola subsp. Baizongia pistaciae (strain Bp).